A 143-amino-acid polypeptide reads, in one-letter code: MANERTLSIIKPDAVAGNNIGAIYDRFEKSGLKIVAAKMMQLDDKKAGGFYAEHAERPFYNDLVSFMTSGPVLVSVLEGENAIATHRDIMGATNPKDAAEGTIRADFASSIDENAVHGSDSAESAAREISYFFNEEEVCARTR.

6 residues coordinate ATP: Lys11, Phe59, Arg87, Thr93, Arg104, and Asn114. The active-site Pros-phosphohistidine intermediate is the His117.

The protein belongs to the NDK family. In terms of assembly, homotetramer. Mg(2+) serves as cofactor.

Its subcellular location is the cytoplasm. It catalyses the reaction a 2'-deoxyribonucleoside 5'-diphosphate + ATP = a 2'-deoxyribonucleoside 5'-triphosphate + ADP. It carries out the reaction a ribonucleoside 5'-diphosphate + ATP = a ribonucleoside 5'-triphosphate + ADP. In terms of biological role, major role in the synthesis of nucleoside triphosphates other than ATP. The ATP gamma phosphate is transferred to the NDP beta phosphate via a ping-pong mechanism, using a phosphorylated active-site intermediate. This is Nucleoside diphosphate kinase from Psychrobacter cryohalolentis (strain ATCC BAA-1226 / DSM 17306 / VKM B-2378 / K5).